The following is a 206-amino-acid chain: Venom allergen 5 (206 aa).

4 disulfides stabilise this stretch: Cys4-Cys16, Cys8-Cys104, Cys28-Cys96, and Cys172-Cys189. The 144-residue stretch at 48–191 (EEHNRFRQKV…MKIHYLICNY (144 aa)) folds into the SCP domain.

Belongs to the CRISP family. Venom allergen 5-like subfamily. In terms of tissue distribution, expressed by the venom gland.

The protein localises to the secreted. The protein is Venom allergen 5 of Polistes gallicus (Paper wasp).